A 137-amino-acid polypeptide reads, in one-letter code: Chaperone protein YscB (137 aa).

In terms of assembly, interacts with SycN to form a complex which specifically binds to YopN.

The protein resides in the cytoplasm. It is found in the cell inner membrane. Functionally, functions as a specific chaperone for YopN. It could facilitate the secretion and the subsequent translocation of YopN. The chain is Chaperone protein YscB (yscB) from Yersinia enterocolitica serotype O:8 / biotype 1B (strain NCTC 13174 / 8081).